The sequence spans 967 residues: Translation initiation factor IF-2 (967 aa).

Residues 34 to 363 (ASSTVEPPVA…APAVGGVSVP (330 aa)) are disordered. 2 stretches are compositionally biased toward low complexity: residues 51–96 (PAGG…GNAA) and 103–154 (ASEA…TPGP). The segment covering 184 to 196 (RSEGGAQRGGPRP) has biased composition (gly residues). A compositionally biased stretch (low complexity) spans 197–206 (GGQQRSGKPG). Gly residues predominate over residues 300 to 333 (PRRGGGPGGGPGGGGGFRGRGGRGGTQGAFGRGG). Over residues 334–345 (ARGKHRKSKRAK) the composition is skewed to basic residues. The tr-type G domain maps to 460–632 (PRPPVVTVMG…IVLTADGALE (173 aa)). Residues 469–476 (GHVDHGKT) are G1. A GTP-binding site is contributed by 469–476 (GHVDHGKT). The tract at residues 494 to 498 (GITQH) is G2. The tract at residues 519-522 (DTPG) is G3. Residues 519–523 (DTPGH) and 573–576 (NKVD) contribute to the GTP site. The tract at residues 573 to 576 (NKVD) is G4. Residues 609 to 611 (SAR) are G5.

Belongs to the TRAFAC class translation factor GTPase superfamily. Classic translation factor GTPase family. IF-2 subfamily.

Its subcellular location is the cytoplasm. Its function is as follows. One of the essential components for the initiation of protein synthesis. Protects formylmethionyl-tRNA from spontaneous hydrolysis and promotes its binding to the 30S ribosomal subunits. Also involved in the hydrolysis of GTP during the formation of the 70S ribosomal complex. This chain is Translation initiation factor IF-2, found in Kocuria rhizophila (strain ATCC 9341 / DSM 348 / NBRC 103217 / DC2201).